A 437-amino-acid chain; its full sequence is GTPase Obg (437 aa).

Residues 2–160 enclose the Obg domain; the sequence is SMFLDTAKIS…RQLELELKIL (159 aa). The 178-residue stretch at 161–338 folds into the OBG-type G domain; it reads ADVGLVGFPS…LLEATAELLA (178 aa). GTP contacts are provided by residues 167–174, 192–196, 214–217, 284–287, and 319–321; these read GFPSVGKS, FTTIV, DLPG, NKMD, and SSL. Mg(2+) contacts are provided by Ser-174 and Thr-194. In terms of domain architecture, OCT spans 359 to 437; that stretch reads GFAETEKDFE…IGKFEFEFVD (79 aa).

Belongs to the TRAFAC class OBG-HflX-like GTPase superfamily. OBG GTPase family. Monomer. Requires Mg(2+) as cofactor.

The protein localises to the cytoplasm. In terms of biological role, an essential GTPase which binds GTP, GDP and possibly (p)ppGpp with moderate affinity, with high nucleotide exchange rates and a fairly low GTP hydrolysis rate. Plays a role in control of the cell cycle, stress response, ribosome biogenesis and in those bacteria that undergo differentiation, in morphogenesis control. This is GTPase Obg from Streptococcus pyogenes serotype M1.